A 227-amino-acid chain; its full sequence is Uracil-DNA glycosylase (227 aa).

Asp68 serves as the catalytic Proton acceptor.

This sequence belongs to the uracil-DNA glycosylase (UDG) superfamily. UNG family.

It is found in the cytoplasm. It catalyses the reaction Hydrolyzes single-stranded DNA or mismatched double-stranded DNA and polynucleotides, releasing free uracil.. Excises uracil residues from the DNA which can arise as a result of misincorporation of dUMP residues by DNA polymerase or due to deamination of cytosine. This is Uracil-DNA glycosylase from Mycobacterium avium (strain 104).